The sequence spans 319 residues: Glycine--tRNA ligase alpha subunit (319 aa).

It belongs to the class-II aminoacyl-tRNA synthetase family. In terms of assembly, tetramer of two alpha and two beta subunits.

The protein resides in the cytoplasm. The enzyme catalyses tRNA(Gly) + glycine + ATP = glycyl-tRNA(Gly) + AMP + diphosphate. This is Glycine--tRNA ligase alpha subunit from Coxiella burnetii (strain CbuK_Q154) (Coxiella burnetii (strain Q154)).